Consider the following 462-residue polypeptide: ATP synthase subunit beta (462 aa).

Glycine 151–threonine 158 is a binding site for ATP.

It belongs to the ATPase alpha/beta chains family. F-type ATPases have 2 components, CF(1) - the catalytic core - and CF(0) - the membrane proton channel. CF(1) has five subunits: alpha(3), beta(3), gamma(1), delta(1), epsilon(1). CF(0) has four main subunits: a(1), b(1), b'(1) and c(9-12).

The protein localises to the cell inner membrane. It catalyses the reaction ATP + H2O + 4 H(+)(in) = ADP + phosphate + 5 H(+)(out). In terms of biological role, produces ATP from ADP in the presence of a proton gradient across the membrane. The catalytic sites are hosted primarily by the beta subunits. In Chlorobium chlorochromatii (strain CaD3), this protein is ATP synthase subunit beta.